The following is a 343-amino-acid chain: Aspartate-semialdehyde dehydrogenase (343 aa).

NADP(+)-binding positions include Ser20–Val23 and Arg48–Ser49. Arg108 lines the phosphate pocket. The Acyl-thioester intermediate role is filled by Cys137. Residue Gln164 participates in substrate binding. NADP(+) is bound at residue Ser167–Gly168. Lys221 provides a ligand contact to phosphate. Substrate is bound at residue Arg243. Residue His250 is the Proton acceptor of the active site. An NADP(+)-binding site is contributed by Gln323.

Belongs to the aspartate-semialdehyde dehydrogenase family. As to quaternary structure, homodimer.

The enzyme catalyses L-aspartate 4-semialdehyde + phosphate + NADP(+) = 4-phospho-L-aspartate + NADPH + H(+). It participates in amino-acid biosynthesis; L-lysine biosynthesis via DAP pathway; (S)-tetrahydrodipicolinate from L-aspartate: step 2/4. It functions in the pathway amino-acid biosynthesis; L-methionine biosynthesis via de novo pathway; L-homoserine from L-aspartate: step 2/3. Its pathway is amino-acid biosynthesis; L-threonine biosynthesis; L-threonine from L-aspartate: step 2/5. Catalyzes the NADPH-dependent formation of L-aspartate-semialdehyde (L-ASA) by the reductive dephosphorylation of L-aspartyl-4-phosphate. The protein is Aspartate-semialdehyde dehydrogenase of Prochlorococcus marinus (strain SARG / CCMP1375 / SS120).